The sequence spans 370 residues: Phosphoserine aminotransferase (370 aa).

An L-glutamate-binding site is contributed by Arg-38. Positions 101, 143, 166, and 189 each coordinate pyridoxal 5'-phosphate. Lys-190 bears the N6-(pyridoxal phosphate)lysine mark. 243–244 (NT) lines the pyridoxal 5'-phosphate pocket.

Belongs to the class-V pyridoxal-phosphate-dependent aminotransferase family. SerC subfamily. In terms of assembly, homodimer. It depends on pyridoxal 5'-phosphate as a cofactor.

It localises to the cytoplasm. The enzyme catalyses O-phospho-L-serine + 2-oxoglutarate = 3-phosphooxypyruvate + L-glutamate. The catalysed reaction is 4-(phosphooxy)-L-threonine + 2-oxoglutarate = (R)-3-hydroxy-2-oxo-4-phosphooxybutanoate + L-glutamate. The protein operates within amino-acid biosynthesis; L-serine biosynthesis; L-serine from 3-phospho-D-glycerate: step 2/3. It functions in the pathway cofactor biosynthesis; pyridoxine 5'-phosphate biosynthesis; pyridoxine 5'-phosphate from D-erythrose 4-phosphate: step 3/5. Catalyzes the reversible conversion of 3-phosphohydroxypyruvate to phosphoserine and of 3-hydroxy-2-oxo-4-phosphonooxybutanoate to phosphohydroxythreonine. The sequence is that of Phosphoserine aminotransferase from Methanosarcina mazei (strain ATCC BAA-159 / DSM 3647 / Goe1 / Go1 / JCM 11833 / OCM 88) (Methanosarcina frisia).